Consider the following 238-residue polypeptide: MQLPALQSATLIRRYKRFLADIELPTGDVMTIHCANTGAMTGCGEKGDKIWYSHSDSQTRKYPHSWELTQLANGQLCCINTHRSNQLVFEALQNKQIKELAMYDEIYPEVKYGEENSRIDFLLKGEGLLDCYVEVKSITLVKGNLGMSPDAVTTRGQKHVRELLAMKKQGHRAVVLFAGLHNGFDRFKIAEYIDPEYDRLLKEAMEQGVEAYAYAGQFEISNEIPTALSLTESVSYIK.

This sequence belongs to the SfsA family.

The sequence is that of Sugar fermentation stimulation protein homolog from Haemophilus influenzae (strain ATCC 51907 / DSM 11121 / KW20 / Rd).